The primary structure comprises 159 residues: MSITAVYPGTFDPITCGHFDLIERAARFYDRLVIAVADNRNKTALFSLEKRVALAKEVTADMPNVEVIGFSGLLVDFVREIDGNVLLRGLRAVSDFEYEFQLASMNRKLAPEVETMFMTPAEQYAFISSSLVREISALGGDVSEFVHPVVAKALNEKQL.

Thr-10 serves as a coordination point for substrate. ATP is bound by residues 10–11 and His-18; that span reads TF. The substrate site is built by Lys-42, Leu-74, and Arg-88. ATP is bound by residues 89–91, Glu-99, and 124–130; these read GLR and YAFISSS.

Belongs to the bacterial CoaD family. Homohexamer. Mg(2+) serves as cofactor.

The protein localises to the cytoplasm. The catalysed reaction is (R)-4'-phosphopantetheine + ATP + H(+) = 3'-dephospho-CoA + diphosphate. It participates in cofactor biosynthesis; coenzyme A biosynthesis; CoA from (R)-pantothenate: step 4/5. Its function is as follows. Reversibly transfers an adenylyl group from ATP to 4'-phosphopantetheine, yielding dephospho-CoA (dPCoA) and pyrophosphate. The sequence is that of Phosphopantetheine adenylyltransferase from Hydrogenovibrio crunogenus (strain DSM 25203 / XCL-2) (Thiomicrospira crunogena).